Reading from the N-terminus, the 304-residue chain is Tyrosine recombinase XerD (304 aa).

In terms of domain architecture, Core-binding (CB) spans 6–91 (EPWRKTLETF…AIRSFHKFLL (86 aa)). In terms of domain architecture, Tyr recombinase spans 112–298 (YLPSVLTIEE…DRSFIKEVHK (187 aa)). Active-site residues include arginine 155, lysine 179, histidine 250, arginine 253, and histidine 276. The active-site O-(3'-phospho-DNA)-tyrosine intermediate is tyrosine 285.

The protein belongs to the 'phage' integrase family. XerD subfamily. In terms of assembly, forms a cyclic heterotetrameric complex composed of two molecules of XerC and two molecules of XerD.

Its subcellular location is the cytoplasm. Site-specific tyrosine recombinase, which acts by catalyzing the cutting and rejoining of the recombining DNA molecules. The XerC-XerD complex is essential to convert dimers of the bacterial chromosome into monomers to permit their segregation at cell division. It also contributes to the segregational stability of plasmids. This chain is Tyrosine recombinase XerD, found in Chlorobaculum tepidum (strain ATCC 49652 / DSM 12025 / NBRC 103806 / TLS) (Chlorobium tepidum).